We begin with the raw amino-acid sequence, 220 residues long: FMN-dependent NADH:quinone oxidoreductase 1 (220 aa).

18–20 is a binding site for FMN; it reads SVS.

It belongs to the azoreductase type 1 family. Homodimer. FMN serves as cofactor.

The catalysed reaction is 2 a quinone + NADH + H(+) = 2 a 1,4-benzosemiquinone + NAD(+). It carries out the reaction N,N-dimethyl-1,4-phenylenediamine + anthranilate + 2 NAD(+) = 2-(4-dimethylaminophenyl)diazenylbenzoate + 2 NADH + 2 H(+). Quinone reductase that provides resistance to thiol-specific stress caused by electrophilic quinones. Functionally, also exhibits azoreductase activity. Catalyzes the reductive cleavage of the azo bond in aromatic azo compounds to the corresponding amines. In Bacillus anthracis, this protein is FMN-dependent NADH:quinone oxidoreductase 1.